Consider the following 1123-residue polypeptide: Probable serine/threonine-protein kinase nek3 (1123 aa).

The region spanning 4–264 is the Protein kinase domain; the sequence is YEEIKTIGKG…VNDILELPFI (261 aa). Residues 10–18 and Lys33 each bind ATP; that span reads IGKGSFGRA. The Proton acceptor role is filled by Asp130. Low complexity-rich tracts occupy residues 283–307 and 327–415; these read NNDS…ISSS and NNNN…TSLK. 6 disordered regions span residues 283 to 310, 325 to 415, 440 to 802, 866 to 887, 908 to 937, and 990 to 1020; these read NNDS…STEV, NINN…TSLK, SKTP…TNSQ, SAST…TNTM, SVKL…SITD, and SLNN…NQNN. The span at 440–459 shows a compositional bias: polar residues; it reads SKTPISGTKNPTTSKITPSI. Composition is skewed to low complexity over residues 478–529, 557–576, 588–617, and 642–653; these read SKPT…SSSV, SNLS…SNSQ, SPTS…SLKS, and NGNSNVNSTVLN. Over residues 654–665 the composition is skewed to polar residues; sequence RSVSSLSIQHKP. Low complexity-rich tracts occupy residues 666–696, 712–738, and 752–802; these read TNSG…TSTT, STPT…TPST, and SSNG…TNSQ. Residues 908–935 show a composition bias toward low complexity; sequence SVKLSSKSSSPIKTSSSSSSSSSSSSSI.

This sequence belongs to the protein kinase superfamily. NEK Ser/Thr protein kinase family. NIMA subfamily.

The enzyme catalyses L-seryl-[protein] + ATP = O-phospho-L-seryl-[protein] + ADP + H(+). It catalyses the reaction L-threonyl-[protein] + ATP = O-phospho-L-threonyl-[protein] + ADP + H(+). This chain is Probable serine/threonine-protein kinase nek3 (nek3), found in Dictyostelium discoideum (Social amoeba).